The chain runs to 184 residues: Dual specificity protein phosphatase 22 (184 aa).

Gly2 is lipidated: N-myristoyl glycine. The region spanning 4–144 (GMNKILPGLY…LQEFEKHEVH (141 aa)) is the Tyrosine-protein phosphatase domain. A Phosphoserine modification is found at Ser58. Cys88 serves as the catalytic Phosphocysteine intermediate. A protein is bound by residues Leu89, Ala90, Val92, Ser93, and Arg94.

Belongs to the protein-tyrosine phosphatase family. Non-receptor class dual specificity subfamily. As to quaternary structure, monomer. Interacts with LCK; the interaction is direct. Interacts with UBR2; the interaction is direct. Myristoylation regulates subcellular location, and is necessary for activation of JNK. As to expression, ubiquitous. Highest expression seen in heart, placenta, lung, liver, kidney and pancreas.

The protein resides in the cytoplasm. The enzyme catalyses O-phospho-L-tyrosyl-[protein] + H2O = L-tyrosyl-[protein] + phosphate. The catalysed reaction is O-phospho-L-seryl-[protein] + H2O = L-seryl-[protein] + phosphate. It catalyses the reaction O-phospho-L-threonyl-[protein] + H2O = L-threonyl-[protein] + phosphate. Its function is as follows. Dual specificity phosphatase; can dephosphorylate both phosphotyrosine and phosphoserine or phosphothreonine residues. Activates the JNK signaling pathway. Inhibits T-cell receptor signaling and T-cell mediated immune responses, acting, at least in part, by inducing degradation of E3 ubiquitin ligase UBR2. Dephosphorylates and thereby induces 'Lys-48'-linked ubiquitination of UBR2, leading to proteasomal degradation of UBR2. Dephosphorylates and thereby inactivates tyrosine kinase LCK. Inhibits UBR2-mediated 'Lys-63'-linked ubiquitination of LCK. May play a role in B-cell receptor (BCR) signaling and B-cell function. The protein is Dual specificity protein phosphatase 22 (DUSP22) of Homo sapiens (Human).